Here is a 210-residue protein sequence, read N- to C-terminus: Ribulose-phosphate 3-epimerase (210 aa).

Residue S9 participates in substrate binding. The a divalent metal cation site is built by H34, D36, and H68. The active-site Proton acceptor is the D36. Substrate contacts are provided by residues H68, 144–147, 177–179, and 199–200; these read GFGG, DGG, and GS. D177 contacts a divalent metal cation. Residue D177 is the Proton donor of the active site.

The protein belongs to the ribulose-phosphate 3-epimerase family. It depends on a divalent metal cation as a cofactor.

The catalysed reaction is D-ribulose 5-phosphate = D-xylulose 5-phosphate. Its pathway is carbohydrate degradation. Catalyzes the reversible epimerization of D-ribulose 5-phosphate to D-xylulose 5-phosphate. The protein is Ribulose-phosphate 3-epimerase of Serratia marcescens.